The chain runs to 995 residues: DNA repair protein Rev1 (995 aa).

One can recognise a BRCT domain in the interval 35–121 (RKSDLFQGIS…KIVDYKPYLL (87 aa)). 2 disordered regions span residues 135–164 (GKPK…DSTK) and 182–211 (VATS…TTAR). Residues 136–164 (KPKDNGANESKSDVEPPKDKAEVEVDSTK) show a composition bias toward basic and acidic residues. The span at 192–211 (ASESKITNLSTTSNNSTTAR) shows a compositional bias: low complexity. The region spanning 275-505 (VMHIDMDCFF…MSLDLLPGVG (231 aa)) is the UmuC domain. Aspartate 279 contributes to the Mg(2+) binding site. DCTP-binding positions include 361–367 (SCSYEAR), asparagine 373, and aspartate 421. Mg(2+) is bound at residue aspartate 421. The active site involves glutamate 422. The segment at 696-868 (SEMRKDKPIP…HYIRSDQIVA (173 aa)) is interaction with PolI. The tract at residues 878–995 (VNPHILKLIS…IEYIRCIKCS (118 aa)) is interaction with PolH/DNApol-eta.

It belongs to the DNA polymerase type-Y family. Interacts (via C-terminus) with PolH/DNApol-eta (via C-terminal regions). Interacts (via C-terminus) with PolI. Mg(2+) serves as cofactor.

Its subcellular location is the nucleus. Functionally, deoxycytidyl transferase involved in DNA repair. Transfers a dCMP residue from dCTP to the 3'-end of a DNA primer in a template-dependent reaction. May assist in the first step in the bypass of abasic lesions by the insertion of a nucleotide opposite the lesion. Required for normal induction of mutations by physical and chemical agents. During homologous recombination (HR) repair of DNA double-strand breaks (DSBs) regulates the extent of repair synthesis. Possibly recruits the DNA polymerase zeta complex or another translesion polymerase to early DSB repair intermediates to initiate repair synthesis, while also blocking the access of more processive polymerases preventing them from acting during the initial stages of HR repair. In Drosophila melanogaster (Fruit fly), this protein is DNA repair protein Rev1.